The chain runs to 371 residues: Vasculin (371 aa).

It belongs to the vasculin family.

The protein localises to the nucleus. In terms of biological role, functions as a GC-rich promoter-specific transactivating transcription factor. This Xenopus laevis (African clawed frog) protein is Vasculin (gpbp1).